The following is an 884-amino-acid chain: Valine--tRNA ligase (884 aa).

Positions Pro46–His56 match the 'HIGH' region motif. Residues Lys520–Ser524 carry the 'KMSKS' region motif. Lys523 serves as a coordination point for ATP. Positions Leu809–Arg844 form a coiled coil.

Belongs to the class-I aminoacyl-tRNA synthetase family. ValS type 1 subfamily. In terms of assembly, monomer.

Its subcellular location is the cytoplasm. The catalysed reaction is tRNA(Val) + L-valine + ATP = L-valyl-tRNA(Val) + AMP + diphosphate. Catalyzes the attachment of valine to tRNA(Val). As ValRS can inadvertently accommodate and process structurally similar amino acids such as threonine, to avoid such errors, it has a 'posttransfer' editing activity that hydrolyzes mischarged Thr-tRNA(Val) in a tRNA-dependent manner. The sequence is that of Valine--tRNA ligase from Streptococcus agalactiae serotype Ia (strain ATCC 27591 / A909 / CDC SS700).